Here is a 277-residue protein sequence, read N- to C-terminus: B3 domain-containing protein At3g19184 (277 aa).

The tract at residues 33–94 is disordered; the sequence is QSLRVSSSSS…LERRPRRSSR (62 aa). The segment at residues 130–221 is a DNA-binding region (TF-B3); it reads FTKPMLQSHV…TFKVYIIRVN (92 aa). Positions 224-250 are enriched in acidic residues; sequence ANNDSDGNEVNDDDSDGNEEDRDNDNE. Residues 224-277 are disordered; it reads ANNDSDGNEVNDDDSDGNEEDRDNDNESNEKQKETVSEGRQLRSSGKRKRRGRK. Residues 251–264 show a composition bias toward basic and acidic residues; that stretch reads SNEKQKETVSEGRQ. Positions 268–277 are enriched in basic residues; it reads SGKRKRRGRK.

It localises to the nucleus. In Arabidopsis thaliana (Mouse-ear cress), this protein is B3 domain-containing protein At3g19184.